The chain runs to 271 residues: tRNA pseudouridine synthase A (271 aa).

D52 (nucleophile) is an active-site residue. Y110 provides a ligand contact to substrate.

Belongs to the tRNA pseudouridine synthase TruA family. In terms of assembly, homodimer.

It carries out the reaction uridine(38/39/40) in tRNA = pseudouridine(38/39/40) in tRNA. Functionally, formation of pseudouridine at positions 38, 39 and 40 in the anticodon stem and loop of transfer RNAs. The sequence is that of tRNA pseudouridine synthase A from Burkholderia mallei (strain NCTC 10247).